A 1770-amino-acid polypeptide reads, in one-letter code: Transposon Ty2-GR1 Gag-Pol polyprotein (1770 aa).

3 stretches are compositionally biased toward polar residues: residues 1-11 (MESQQLHQNPH), 19-39 (ASVT…SASN), and 49-60 (KVNSQQETTPGT). 2 disordered regions span residues 1–86 (MESQ…GQYQ) and 360–453 (HSEY…LPDH). Residues 295-397 (ENNINVSDRL…SSKPRAAKAH (103 aa)) are RNA-binding. The segment covering 369–381 (TSPNTTNTKVTTR) has biased composition (low complexity). The span at 399 to 408 (IATSSKFSRV) shows a compositional bias: polar residues. The For protease activity; shared with dimeric partner role is filled by D457. The interval 579-636 (NVNKSKSVNKYPYPLIHRMLGHANFRSIQKSLKKNAVTYLKESDIEWSNASTYQCPDC) is integrase-type zinc finger-like. The 176-residue stretch at 656 to 831 (ESYEPFQYLH…AGLDITTILP (176 aa)) folds into the Integrase catalytic domain. Residues D667 and D732 each contribute to the Mg(2+) site. Disordered regions lie at residues 1004 to 1034 (MGGT…STNE), 1059 to 1135 (TEEP…KSSK), 1146 to 1165 (LPLP…VSKD), and 1170 to 1205 (HSRQ…TEIE). 2 stretches are compositionally biased toward polar residues: residues 1009-1034 (ESDT…STNE) and 1065-1082 (QRNS…STPS). Positions 1151 to 1165 (LTHKSPTDTSDVSKD) are enriched in basic and acidic residues. Residues 1193–1227 (KKRSLEDNETEIEVSRDTWNNKNMRSLEPPRSKKR) carry the Bipartite nuclear localization signal motif. One can recognise a Reverse transcriptase Ty1/copia-type domain in the interval 1353-1491 (NDYYITQLDI…DILGLEIKYQ (139 aa)). Residues D1361, D1442, D1443, D1625, E1667, and D1700 each contribute to the Mg(2+) site. The 143-residue stretch at 1625–1767 (DASYGNQPYY…IKTFKLLTNK (143 aa)) folds into the RNase H Ty1/copia-type domain.

The capsid protein forms a homotrimer, from which the VLPs are assembled. The protease is a homodimer, whose active site consists of two apposed aspartic acid residues. In terms of processing, initially, virus-like particles (VLPs) are composed of the structural unprocessed proteins Gag and Gag-Pol, and also contain the host initiator methionine tRNA (tRNA(i)-Met) which serves as a primer for minus-strand DNA synthesis, and a dimer of genomic Ty RNA. Processing of the polyproteins occurs within the particle and proceeds by an ordered pathway, called maturation. First, the protease (PR) is released by autocatalytic cleavage of the Gag-Pol polyprotein, and this cleavage is a prerequisite for subsequent processing at the remaining sites to release the mature structural and catalytic proteins. Maturation takes place prior to the RT reaction and is required to produce transposition-competent VLPs.

The protein resides in the cytoplasm. Its subcellular location is the nucleus. The catalysed reaction is DNA(n) + a 2'-deoxyribonucleoside 5'-triphosphate = DNA(n+1) + diphosphate. It carries out the reaction Endonucleolytic cleavage to 5'-phosphomonoester.. Capsid protein (CA) is the structural component of the virus-like particle (VLP), forming the shell that encapsulates the retrotransposons dimeric RNA genome. The particles are assembled from trimer-clustered units and there are holes in the capsid shells that allow for the diffusion of macromolecules. CA also has nucleocapsid-like chaperone activity, promoting primer tRNA(i)-Met annealing to the multipartite primer-binding site (PBS), dimerization of Ty2 RNA and initiation of reverse transcription. Its function is as follows. The aspartyl protease (PR) mediates the proteolytic cleavages of the Gag and Gag-Pol polyproteins after assembly of the VLP. In terms of biological role, reverse transcriptase/ribonuclease H (RT) is a multifunctional enzyme that catalyzes the conversion of the retro-elements RNA genome into dsDNA within the VLP. The enzyme displays a DNA polymerase activity that can copy either DNA or RNA templates, and a ribonuclease H (RNase H) activity that cleaves the RNA strand of RNA-DNA heteroduplexes during plus-strand synthesis and hydrolyzes RNA primers. The conversion leads to a linear dsDNA copy of the retrotransposon that includes long terminal repeats (LTRs) at both ends. Functionally, integrase (IN) targets the VLP to the nucleus, where a subparticle preintegration complex (PIC) containing at least integrase and the newly synthesized dsDNA copy of the retrotransposon must transit the nuclear membrane. Once in the nucleus, integrase performs the integration of the dsDNA into the host genome. The chain is Transposon Ty2-GR1 Gag-Pol polyprotein (TY2B-GR1) from Saccharomyces cerevisiae (strain ATCC 204508 / S288c) (Baker's yeast).